Consider the following 185-residue polypeptide: Threonylcarbamoyl-AMP synthase (185 aa).

The YrdC-like domain maps to 4-185; it reads DWRVQQVARV…LRSGEVIRPA (182 aa).

The protein belongs to the SUA5 family. TsaC subfamily.

Its subcellular location is the cytoplasm. It carries out the reaction L-threonine + hydrogencarbonate + ATP = L-threonylcarbamoyladenylate + diphosphate + H2O. In terms of biological role, required for the formation of a threonylcarbamoyl group on adenosine at position 37 (t(6)A37) in tRNAs that read codons beginning with adenine. Catalyzes the conversion of L-threonine, HCO(3)(-)/CO(2) and ATP to give threonylcarbamoyl-AMP (TC-AMP) as the acyladenylate intermediate, with the release of diphosphate. In Stutzerimonas stutzeri (strain A1501) (Pseudomonas stutzeri), this protein is Threonylcarbamoyl-AMP synthase.